We begin with the raw amino-acid sequence, 267 residues long: Alkaline ceramidase 3 (267 aa).

Residues 1–33 (MAPAADREGYWGPTTSTLDWCEENYSVTWYIAE) are Cytoplasmic-facing. Ca(2+)-binding residues include Asp19, Trp20, Glu22, Asn24, and Glu33. A helical membrane pass occupies residues 34 to 55 (FWNTVSNLIMIIPPMFGAVQSV). Residues 56–61 (RDGLEK) are Lumenal-facing. Residues 62–82 (RYIASYLALTVVGMGSWCFHM) form a helical membrane-spanning segment. His81 contributes to the Zn(2+) binding site. At 83–87 (TLKYE) the chain is on the cytoplasmic side. The chain crosses the membrane as a helical span at residues 88–108 (MQLLDELPMIYSCCIFVYCMF). Over 109-118 (ECFKIKNSVN) the chain is Lumenal. Residues 119–139 (YHLLFTLVLFSLIVTTVYLKV) traverse the membrane as a helical segment. The Cytoplasmic segment spans residues 140–141 (KE). A helical transmembrane segment spans residues 142-162 (PIFHQVMYGMLVFTLVLRSIY). Topologically, residues 163–173 (IVTWVYPWLRG) are lumenal. Residues 174–194 (LGYTSLGIFLLGFLFWNIDNI) form a helical membrane-spanning segment. Over 195 to 215 (FCESLRNFRKKVPPIIGITTQ) the chain is Cytoplasmic. The chain crosses the membrane as a helical span at residues 216 to 236 (FHAWWHILTGLGSYLHILFSL). Zn(2+) contacts are provided by His217 and His221. The Lumenal portion of the chain corresponds to 237–267 (YTRTLYLRYRPKVKFLFGIWPVILFEPLRKH).

Belongs to the alkaline ceramidase family. Zn(2+) serves as cofactor. Ubiquitously expressed. Highly expressed in placenta. Expressed in erythrocytes.

Its subcellular location is the endoplasmic reticulum membrane. The protein localises to the golgi apparatus membrane. The catalysed reaction is an N-acyl-(4R)-4-hydroxysphinganine + H2O = (4R)-hydroxysphinganine + a fatty acid. The enzyme catalyses N-(5Z,8Z,11Z,14Z-eicosatetraenoyl)-sphing-4-enine + H2O = sphing-4-enine + (5Z,8Z,11Z,14Z)-eicosatetraenoate. It catalyses the reaction N-(5Z,8Z,11Z,14Z-eicosatetraenoyl)-sphinganine + H2O = sphinganine + (5Z,8Z,11Z,14Z)-eicosatetraenoate. It carries out the reaction N-(5Z,8Z,11Z,14Z-eicosatetraenoyl)-(4R)-hydroxysphinganine + H2O = (4R)-hydroxysphinganine + (5Z,8Z,11Z,14Z)-eicosatetraenoate. The catalysed reaction is N-(11Z-eicosenoyl)-sphing-4-enine + H2O = (11Z)-eicosenoate + sphing-4-enine. The enzyme catalyses N-(11Z-eicosenoyl)-sphinganine + H2O = (11Z)-eicosenoate + sphinganine. It catalyses the reaction N-(11Z-eicosenoyl)-(4R)-hydroxysphinganine + H2O = (11Z)-eicosenoate + (4R)-hydroxysphinganine. It carries out the reaction N-(9Z-octadecenoyl)-sphing-4-enine + H2O = sphing-4-enine + (9Z)-octadecenoate. The catalysed reaction is N-(9Z-octadecenoyl)-sphinganine + H2O = sphinganine + (9Z)-octadecenoate. The enzyme catalyses N-(9Z-octadecenoyl)-(4R)-hydroxysphinganine + H2O = (4R)-hydroxysphinganine + (9Z)-octadecenoate. It catalyses the reaction an N-acylsphing-4-enine + H2O = sphing-4-enine + a fatty acid. It carries out the reaction an N-acylsphinganine + H2O = sphinganine + a fatty acid. Its pathway is lipid metabolism; sphingolipid metabolism. Its activity is regulated as follows. Activated by 5 mM Ca(2+) and inhibited by 5 mM Zn(2+). Functionally, endoplasmic reticulum and Golgi ceramidase that catalyzes the hydrolysis of unsaturated long-chain C18:1-, C20:1- and C20:4-ceramides, dihydroceramides and phytoceramides into sphingoid bases like sphingosine and free fatty acids at alkaline pH. Ceramides, sphingosine, and its phosphorylated form sphingosine-1-phosphate are bioactive lipids that mediate cellular signaling pathways regulating several biological processes including cell proliferation, apoptosis and differentiation. Controls the generation of sphingosine in erythrocytes, and thereby sphingosine-1-phosphate in plasma. Through the regulation of ceramides and sphingosine-1-phosphate homeostasis in the brain may play a role in neurons survival and function. By regulating the levels of pro-inflammatory ceramides in immune cells and tissues, may modulate the inflammatory response. This chain is Alkaline ceramidase 3 (ACER3), found in Homo sapiens (Human).